A 403-amino-acid chain; its full sequence is Serine/threonine transporter SstT (403 aa).

A run of 10 helical transmembrane segments spans residues 15–35 (LGLI…AIVW), 49–69 (FISA…MTAI), 85–105 (LLYV…SFIF), 142–162 (ALLN…GMML), 183–203 (IVQL…AGTL), 218–238 (LAVI…LIVF), 246–268 (YPLV…SSAA), 289–309 (ISIP…ISVI), 317–337 (LGIG…SLAA), and 362–382 (PDVA…QDAT).

The protein belongs to the dicarboxylate/amino acid:cation symporter (DAACS) (TC 2.A.23) family.

The protein resides in the cell inner membrane. The enzyme catalyses L-serine(in) + Na(+)(in) = L-serine(out) + Na(+)(out). It catalyses the reaction L-threonine(in) + Na(+)(in) = L-threonine(out) + Na(+)(out). Its function is as follows. Involved in the import of serine and threonine into the cell, with the concomitant import of sodium (symport system). This chain is Serine/threonine transporter SstT, found in Chromohalobacter salexigens (strain ATCC BAA-138 / DSM 3043 / CIP 106854 / NCIMB 13768 / 1H11).